The primary structure comprises 389 residues: Pyruvate dehydrogenase E1 component subunit alpha, somatic form, mitochondrial (389 aa).

Residues 1–28 constitute a mitochondrion transit peptide; the sequence is GKMLAAVSRVLSGVAQKPASRVLVASRT. Position 62 is an N6-acetyllysine; alternate (K62). K62 bears the N6-succinyllysine; alternate mark. Pyruvate is bound by residues H91, Y117, R118, A156, G164, V166, D195, G196, A197, N224, and Y226. Residues Y117 and R118 each contribute to the thiamine diphosphate site. The thiamine diphosphate site is built by G164, V166, D195, G196, A197, and N224. D195 serves as a coordination point for Mg(2+). N224 and Y226 together coordinate Mg(2+). S231 carries the post-translational modification Phosphoserine; by PDK1. K243 bears the N6-acetyllysine; alternate mark. K243 carries the N6-succinyllysine; alternate modification. K276 carries the N6-succinyllysine modification. H291 is a binding site for thiamine diphosphate. The residue at position 292 (S292) is a Phosphoserine; by PDK1, PDK2, PDK3 and PDK4. At S294 the chain carries Phosphoserine. S299 is modified (phosphoserine; by PDK1, PDK2, PDK3 and PDK4). Phosphotyrosine is present on Y300. Position 312 is an N6-acetyllysine; alternate (K312). K312 is subject to N6-succinyllysine; alternate. 2 positions are modified to N6-acetyllysine: K320 and K335. K384 is subject to N6-succinyllysine.

In terms of assembly, heterotetramer of two PDHA1 and two PDHB subunits. The heterotetramer interacts with DLAT, and is part of the multimeric pyruvate dehydrogenase complex that contains multiple copies of pyruvate dehydrogenase (E1), dihydrolipoamide acetyltransferase (DLAT, E2) and lipoamide dehydrogenase (DLD, E3). These subunits are bound to an inner core composed of about 48 DLAT and 12 PDHX molecules. Requires thiamine diphosphate as cofactor. The cofactor is Mg(2+). Phosphorylation at Ser-231, Ser-292 and Ser-299 by PDK family kinases inactivates the enzyme; for this phosphorylation at a single site is sufficient. Phosphorylation at Ser-292 interferes with access to active site, and thereby inactivates the enzyme. Dephosphorylation at all three sites, i.e. at Ser-231, Ser-292 and Ser-299, is required for reactivation. Post-translationally, acetylation alters the phosphorylation pattern. Deacetylated by SIRT3.

The protein localises to the mitochondrion matrix. It carries out the reaction N(6)-[(R)-lipoyl]-L-lysyl-[protein] + pyruvate + H(+) = N(6)-[(R)-S(8)-acetyldihydrolipoyl]-L-lysyl-[protein] + CO2. Pyruvate dehydrogenase activity is inhibited by phosphorylation of PDHA1; it is reactivated by dephosphorylation. Its function is as follows. The pyruvate dehydrogenase complex catalyzes the overall conversion of pyruvate to acetyl-CoA and CO(2), and thereby links the glycolytic pathway to the tricarboxylic cycle. The chain is Pyruvate dehydrogenase E1 component subunit alpha, somatic form, mitochondrial (PDHA1) from Sus scrofa (Pig).